We begin with the raw amino-acid sequence, 304 residues long: Protein pxr1 (304 aa).

Residues 1 to 11 (MGLAAPRKKTK) show a composition bias toward basic residues. 3 disordered regions span residues 1-25 (MGLAAPRKKTKISHDPNNTSWSRST), 144-238 (NATA…DTET), and 256-276 (TSLLASNGPSTSRERQPMGRR). Residues 15-25 (DPNNTSWSRST) show a composition bias toward polar residues. One can recognise a G-patch domain in the interval 25-79 (TDGFGHRILKAQGWTPGDFLGARNATHSDLFTTASASHIRVVLKDDTLGLGARPK). Basic and acidic residues-rich tracts occupy residues 154 to 170 (LRVDFPRETSSNEHENG) and 204 to 238 (GKEMDMSPRKSREKKQEKIQKKRKIGDCDRLDTET). Positions 256 to 266 (TSLLASNGPST) are enriched in polar residues.

This sequence belongs to the PINX1 family.

It is found in the nucleus. It localises to the nucleolus. Involved in rRNA-processing at A0, A1 and A2 sites and negatively regulates telomerase. The polypeptide is Protein pxr1 (pxr1) (Aspergillus fumigatus (strain ATCC MYA-4609 / CBS 101355 / FGSC A1100 / Af293) (Neosartorya fumigata)).